A 551-amino-acid chain; its full sequence is Structure-specific endonuclease subunit MUS81 (551 aa).

Basic and acidic residues predominate over residues 84 to 93 (HRTSGGDHAP). The segment at 84-130 (HRTSGGDHAPDSPSGENSPAPQGRLAEVQDSSMPVPAQPKAGGSGSY) is disordered. Residues Ser95 and Ser101 each carry the phosphoserine modification. The tract at residues 125–244 (GGSGSYWPAR…PGEETAVPGA (120 aa)) is interaction with BLM. The tract at residues 131-230 (WPARHSGARV…GLSLLNVGIG (100 aa)) is winged helix domain (WHD); critical for endonuclease activity. One can recognise an ERCC4 domain in the interval 270 to 372 (LLCVDIGETR…RRVYLVEEHG (103 aa)). Catalysis depends on residues Asp274, Glu277, and Asp307. The Mg(2+) site is built by Asp274, Glu277, Asp307, Glu333, and Arg334. Residues 471–545 (VREVFARQLM…LSRTLSQLYC (75 aa)) form a helix-hairpin-helix (2HhH); involved in DNA recognition and bending region.

Belongs to the XPF family. As to quaternary structure, part of the heterodimeric DNA structure-specific endonuclease complex MUS81-EME1. Part of the heterodimeric DNA structure-specific endonuclease complex MUS81-EME2. Interacts with BLM; may stimulate the endonuclease activity of MUS81. Interacts with SLX4/BTBD12; this interaction is direct and links the MUS81-EME1 complex to SLX4, which may coordinate the action of the structure-specific endonuclease during DNA repair. Interacts with DCLRE1B/Apollo. Interacts with RECQL5; this interaction stimulates mitotic DNA synthesis. Interacts with CHEK2. Mg(2+) is required as a cofactor. As to expression, widely expressed.

The protein localises to the nucleus. It localises to the nucleolus. In terms of biological role, catalytic subunit of two functionally distinct, structure-specific, heterodimeric DNA endonucleases MUS81-EME1 and MUS81-EME2 that are involved in the maintenance of genome stability. Both endonucleases have essentially the same substrate specificity though MUS81-EME2 is more active than its MUS81-EME1 counterpart. Both cleave 3'-flaps and nicked Holliday junctions, and exhibit limited endonuclease activity with 5' flaps and nicked double-stranded DNAs. MUS81-EME2 which is active during the replication of DNA is more specifically involved in replication fork processing. Replication forks frequently encounter obstacles to their passage, including DNA base lesions, DNA interstrand cross-links, difficult-to-replicate sequences, transcription bubbles, or tightly bound proteins. One mechanism for the restart of a stalled replication fork involves nucleolytic cleavage mediated by the MUS81-EME2 endonuclease. By acting upon the stalled fork, MUS81-EME2 generates a DNA double-strand break (DSB) that can be repaired by homologous recombination, leading to the restoration of an active fork. MUS81-EME2 could also function in telomere maintenance. MUS81-EME1, on the other hand, is active later in the cell cycle and functions in the resolution of mitotic recombination intermediates including the Holliday junctions, the four-way DNA intermediates that form during homologous recombination. This chain is Structure-specific endonuclease subunit MUS81, found in Homo sapiens (Human).